A 357-amino-acid polypeptide reads, in one-letter code: RNA-binding protein 43 (357 aa).

Positions 15–104 (RTVVVAGLPV…VSLRVSHFGD (90 aa)) constitute an RRM domain.

The sequence is that of RNA-binding protein 43 (RBM43) from Homo sapiens (Human).